A 251-amino-acid chain; its full sequence is MRKPIIAGNWKMNKTLSEAVSFVEEVKGQIPAASAVDAVVCSPALFLERLVAATEGTDLQVGAQNMHFEKNGAFTGEISPVALSDLKVGYVVLGHSERREMFAETDESVNKKTLAAFEHGLTPIVCCGETLEERESGKTFDLVAGQVTKALAGLTEEQVKATVIAYEPIWAIGTGKSSSSADANEVCAHIRKVVAEAVSPEAAEAVRIQYGGSVKPENIKEYMAQSDIDGALVGGASLEPASFLGLLGAVK.

Residue Asn-9–Lys-11 coordinates substrate. Catalysis depends on His-95, which acts as the Electrophile. The Proton acceptor role is filled by Glu-167. Substrate is bound by residues Gly-173, Ser-213, and Gly-234–Gly-235. Position 213 is a phosphoserine (Ser-213).

This sequence belongs to the triosephosphate isomerase family. As to quaternary structure, homodimer.

The protein resides in the cytoplasm. The enzyme catalyses D-glyceraldehyde 3-phosphate = dihydroxyacetone phosphate. Its pathway is carbohydrate biosynthesis; gluconeogenesis. The protein operates within carbohydrate degradation; glycolysis; D-glyceraldehyde 3-phosphate from glycerone phosphate: step 1/1. Functionally, involved in the gluconeogenesis. Catalyzes stereospecifically the conversion of dihydroxyacetone phosphate (DHAP) to D-glyceraldehyde-3-phosphate (G3P). This chain is Triosephosphate isomerase, found in Bacillus cereus (strain G9842).